The sequence spans 102 residues: MSEKSVEAAAELSAKDLKEKKDKVEEKAGRKERKKEVVEEEENGAEEEEEETAEDGEDDDEGDEEDEEEEEEEDEGPVRKRTAEEEDEADPKRQKTENGASA.

The disordered stretch occupies residues 1–102 (MSEKSVEAAA…RQKTENGASA (102 aa)). S2 carries the post-translational modification N-acetylserine. S2 is subject to Phosphoserine. K4 is modified (N6-acetyllysine). S5 and S13 each carry phosphoserine. The span at 13–37 (SAKDLKEKKDKVEEKAGRKERKKEV) shows a compositional bias: basic and acidic residues. K15 is subject to N6-acetyllysine. The span at 38–75 (VEEEENGAEEEEEETAEDGEDDDEGDEEDEEEEEEEDE) shows a compositional bias: acidic residues. At T52 the chain carries Phosphothreonine. Position 92 is an N6-acetyllysine (K92).

The protein belongs to the pro/parathymosin family.

Its function is as follows. Parathymosin may mediate immune function by blocking the effect of prothymosin alpha which confers resistance to certain opportunistic infections. This is Parathymosin (Ptms) from Rattus norvegicus (Rat).